The sequence spans 558 residues: Serine palmitoyltransferase 2 (558 aa).

The span at 33 to 42 (HDDDEEEEEV) shows a compositional bias: acidic residues. Positions 33 to 57 (HDDDEEEEEVKVDQGSEETTSSHDI) are disordered. An N6-(pyridoxal phosphate)lysine modification is found at lysine 384.

It belongs to the class-II pyridoxal-phosphate-dependent aminotransferase family. In terms of assembly, heterodimer of sptl-1/sptl-2. Pyridoxal 5'-phosphate serves as cofactor.

The enzyme catalyses L-serine + hexadecanoyl-CoA + H(+) = 3-oxosphinganine + CO2 + CoA. The protein operates within lipid metabolism; sphingolipid metabolism. Component of the serine palmitoyltransferase (SPT) that catalyzes the first committed step in sphingolipid biosynthesis, which is the condensation of an acyl-CoA species and L-serine. The catalytic core is composed of a heterodimer of sptl-1 and sptl-2 or sptl-1 and sptl-3. Required for the specification of abicobasal polarity and development of the gut lumen. The polypeptide is Serine palmitoyltransferase 2 (sptl-2) (Caenorhabditis elegans).